Here is a 345-residue protein sequence, read N- to C-terminus: 4-hydroxy-2-oxovalerate aldolase (345 aa).

A Pyruvate carboxyltransferase domain is found at 8–260 (ITVHDMTLRD…ETGVDVFKIQ (253 aa)). Residue 16–17 (RD) participates in substrate binding. Residue D17 participates in Mn(2+) binding. H20 serves as the catalytic Proton acceptor. Substrate-binding residues include S170 and H199. H199 and H201 together coordinate Mn(2+). Substrate is bound at residue Y290.

Belongs to the 4-hydroxy-2-oxovalerate aldolase family.

It catalyses the reaction (S)-4-hydroxy-2-oxopentanoate = acetaldehyde + pyruvate. The protein is 4-hydroxy-2-oxovalerate aldolase of Leptothrix cholodnii (strain ATCC 51168 / LMG 8142 / SP-6) (Leptothrix discophora (strain SP-6)).